Reading from the N-terminus, the 178-residue chain is Dual-action ribosomal maturation protein DarP (178 aa).

Belongs to the DarP family.

The protein resides in the cytoplasm. Member of a network of 50S ribosomal subunit biogenesis factors which assembles along the 30S-50S interface, preventing incorrect 23S rRNA structures from forming. Promotes peptidyl transferase center (PTC) maturation. The chain is Dual-action ribosomal maturation protein DarP from Haemophilus influenzae (strain 86-028NP).